The chain runs to 344 residues: tRNA N6-adenosine threonylcarbamoyltransferase (344 aa).

Residues His115 and His119 each contribute to the Fe cation site. Substrate-binding positions include 137–141, Asp170, Gly183, Asp187, and Asn276; that span reads LVSGG. A Fe cation-binding site is contributed by Asp306.

Belongs to the KAE1 / TsaD family. The cofactor is Fe(2+).

Its subcellular location is the cytoplasm. The catalysed reaction is L-threonylcarbamoyladenylate + adenosine(37) in tRNA = N(6)-L-threonylcarbamoyladenosine(37) in tRNA + AMP + H(+). Required for the formation of a threonylcarbamoyl group on adenosine at position 37 (t(6)A37) in tRNAs that read codons beginning with adenine. Is involved in the transfer of the threonylcarbamoyl moiety of threonylcarbamoyl-AMP (TC-AMP) to the N6 group of A37, together with TsaE and TsaB. TsaD likely plays a direct catalytic role in this reaction. The protein is tRNA N6-adenosine threonylcarbamoyltransferase of Limosilactobacillus fermentum (strain NBRC 3956 / LMG 18251) (Lactobacillus fermentum).